Here is a 119-residue protein sequence, read N- to C-terminus: Large ribosomal subunit protein uL22 (119 aa).

The protein belongs to the universal ribosomal protein uL22 family. As to quaternary structure, part of the 50S ribosomal subunit.

In terms of biological role, this protein binds specifically to 23S rRNA; its binding is stimulated by other ribosomal proteins, e.g. L4, L17, and L20. It is important during the early stages of 50S assembly. It makes multiple contacts with different domains of the 23S rRNA in the assembled 50S subunit and ribosome. The globular domain of the protein is located near the polypeptide exit tunnel on the outside of the subunit, while an extended beta-hairpin is found that lines the wall of the exit tunnel in the center of the 70S ribosome. The chain is Large ribosomal subunit protein uL22 from Bifidobacterium animalis subsp. lactis (strain AD011).